A 508-amino-acid polypeptide reads, in one-letter code: Cobyric acid synthase (508 aa).

The region spanning 266-464 (SLRIAVVAYP…AHGLFESTEV (199 aa)) is the GATase cobBQ-type domain. Residue Cys347 is the Nucleophile of the active site. Residue His456 is part of the active site.

The protein belongs to the CobB/CobQ family. CobQ subfamily.

Its pathway is cofactor biosynthesis; adenosylcobalamin biosynthesis. Its function is as follows. Catalyzes amidations at positions B, D, E, and G on adenosylcobyrinic A,C-diamide. NH(2) groups are provided by glutamine, and one molecule of ATP is hydrogenolyzed for each amidation. In Methylibium petroleiphilum (strain ATCC BAA-1232 / LMG 22953 / PM1), this protein is Cobyric acid synthase.